A 1510-amino-acid polypeptide reads, in one-letter code: Cysteine-tryptophan domain-containing zinc finger protein 5 (1510 aa).

Polar residues predominate over residues 174–196; it reads YCQRTSSENDSNHSQQLLNSGPE. 4 disordered regions span residues 174–198, 449–497, 555–574, and 582–616; these read YCQR…PEQK, SSLD…CAKD, KPNY…YVLD, and LHTE…DHKI. The span at 454-465 shows a compositional bias: basic and acidic residues; it reads GFSHKTKSDKCN. The span at 467–476 shows a compositional bias: polar residues; that stretch reads QPVTTSSQLQ. Basic and acidic residues-rich tracts occupy residues 479-497 and 556-574; these read PAKK…CAKD and PNYD…YVLD. Residues 645 to 698 form a CW-type zinc finger; it reads SEPVDQWVCCDKCETWRLLPYGMNSDTLPKKWRCSMQSWLPGMNNCKLSEGETT. Zn(2+) is bound by residues C654, C657, C678, and C690. The segment covering 768-780 has biased composition (basic and acidic residues); sequence KQKRIESSDKGEK. Disordered regions lie at residues 768–893, 1003–1050, and 1149–1194; these read KQKR…RDLF, STAA…LDRH, and LPIH…VRPD. A compositionally biased stretch (polar residues) spans 781–790; it reads STVTISSGQT. A compositionally biased stretch (basic and acidic residues) spans 874 to 893; that stretch reads NSDRGARASDAGKSDPRDLF. Residues 1003-1016 show a composition bias toward low complexity; it reads STAATSSSSKVSSS. 2 stretches are compositionally biased toward polar residues: residues 1026–1040 and 1162–1182; these read TRTS…SPLR and PDQN…QAKL.

Highly expressed in young panicles. Expressed at low levels in leaf sheaths, nodes, internodes and axillary buds.

Its subcellular location is the nucleus. Its function is as follows. Binds to histones H3K4me1, H3K4me2 and H3K4me3 in GST pull-down assay. May facilitate the recruitment of effectors to mediate gene expression. This is Cysteine-tryptophan domain-containing zinc finger protein 5 from Oryza sativa subsp. japonica (Rice).